We begin with the raw amino-acid sequence, 507 residues long: Glycerol kinase 2 (507 aa).

T16 serves as a coordination point for ADP. Residues T16, T17, and S18 each contribute to the ATP site. Position 16 (T16) interacts with sn-glycerol 3-phosphate. R20 contributes to the ADP binding site. R86, E87, Y138, and D248 together coordinate sn-glycerol 3-phosphate. R86, E87, Y138, D248, and Q249 together coordinate glycerol. ADP-binding residues include T270 and G314. ATP is bound by residues T270, G314, Q318, and G415. G415 and N419 together coordinate ADP.

It belongs to the FGGY kinase family.

The enzyme catalyses glycerol + ATP = sn-glycerol 3-phosphate + ADP + H(+). It participates in polyol metabolism; glycerol degradation via glycerol kinase pathway; sn-glycerol 3-phosphate from glycerol: step 1/1. Inhibited by fructose 1,6-bisphosphate (FBP). Its function is as follows. Key enzyme in the regulation of glycerol uptake and metabolism. Catalyzes the phosphorylation of glycerol to yield sn-glycerol 3-phosphate. The chain is Glycerol kinase 2 from Streptomyces avermitilis (strain ATCC 31267 / DSM 46492 / JCM 5070 / NBRC 14893 / NCIMB 12804 / NRRL 8165 / MA-4680).